Consider the following 488-residue polypeptide: MAEATDVVLVGGGIMSATLGVLLKELEPSWEITLIERLEDVALESSNAWNNAGTGHSALCELNYAPLGANGIIDPARALNIAEQFHVSRQFWATLVAEGKLEDNSFINAVPHMSLVMNEDHCSYLQKRYDAFKTQKLFENMEFSTDRNKISDWAPLMMRGRDENQPVAANYSAEGTDVDFGRLTRQMVKYLQGKGVKTEFNRHVEDIKRESDGAWVLKTADTRNPDGQLTLRTRFLFLGAGGGALTLLQKSGIPEGKGYGGFPVSGLFFRNSNPETAGQHNAKVYGQASVGAPPMSVPHLDTRNVDGKRHLMFGPYAGFRSNFLKQGSLMDLPLSIHMDNLYPMLCAGWANMPLTKYLLGELRKTKEERFASLLEYYPEANPDDWELITAGQRVQIIKKDSEKGGVLQFGTEIVAHADGSLAALLGASPGASTAVPLMIRLMHQCFPERAPSWEDRLKELVPGYGIKLNENPERADEIIAYTAKVLDI.

This sequence belongs to the MQO family. Requires FAD as cofactor.

The catalysed reaction is (S)-malate + a quinone = a quinol + oxaloacetate. The protein operates within carbohydrate metabolism; tricarboxylic acid cycle; oxaloacetate from (S)-malate (quinone route): step 1/1. This Neisseria meningitidis serogroup C (strain 053442) protein is Probable malate:quinone oxidoreductase.